Here is a 367-residue protein sequence, read N- to C-terminus: DNA replication and repair protein RecF (367 aa).

30 to 37 (GANGSGKT) contributes to the ATP binding site.

This sequence belongs to the RecF family.

The protein localises to the cytoplasm. Functionally, the RecF protein is involved in DNA metabolism; it is required for DNA replication and normal SOS inducibility. RecF binds preferentially to single-stranded, linear DNA. It also seems to bind ATP. The sequence is that of DNA replication and repair protein RecF from Pseudomonas fluorescens (strain Pf0-1).